A 123-amino-acid polypeptide reads, in one-letter code: Small ribosomal subunit protein uS12 (123 aa).

3-methylthioaspartic acid is present on Asp89. The tract at residues Ser101–Lys123 is disordered. A compositionally biased stretch (basic residues) spans Gly113–Lys123.

This sequence belongs to the universal ribosomal protein uS12 family. Part of the 30S ribosomal subunit. Contacts proteins S8 and S17. May interact with IF1 in the 30S initiation complex.

Functionally, with S4 and S5 plays an important role in translational accuracy. In terms of biological role, interacts with and stabilizes bases of the 16S rRNA that are involved in tRNA selection in the A site and with the mRNA backbone. Located at the interface of the 30S and 50S subunits, it traverses the body of the 30S subunit contacting proteins on the other side and probably holding the rRNA structure together. The combined cluster of proteins S8, S12 and S17 appears to hold together the shoulder and platform of the 30S subunit. This Azotobacter vinelandii (strain DJ / ATCC BAA-1303) protein is Small ribosomal subunit protein uS12.